Reading from the N-terminus, the 1391-residue chain is Leucine-rich PPR motif-containing protein, mitochondrial (1391 aa).

The transit peptide at 1–42 (MSALLAGARFLLRPGLRALPAPCVRLSPGQGRYLNNTPGHFA) directs the protein to the mitochondrion. 15 PPR repeats span residues 110–144 (LLRS…GAVF), 145–179 (DVSH…NVQP), 180–214 (NRVT…DLPI), 215–249 (TEAV…GIEP), 250–284 (GPET…EGSL), 389–425 (NLHS…GMPV), 704–738 (AIGT…DSSA), 741–775 (DTSK…DVPL), 779–813 (TTTS…GLAK), 815–850 (TSNL…NCMP), 948–982 (RDDM…NVIP), 1028–1062 (PESS…GTAM), 1063–1093 (SASA…AENH), 1100–1134 (NDAA…DKVP), and 1310–1344 (RETA…SVSP). The RNA-binding stretch occupies residues 1118–1387 (KDALASLKAM…KLKKDKADSY (270 aa)).

It is found in the mitochondrion. The protein localises to the nucleus. May play a role in RNA metabolism in both nuclei and mitochondria. May bind mature mRNA in the nucleus outer membrane. In mitochondria binds to poly(A) mRNA. May be involved in transcription regulation. Binds single-stranded DNA. The protein is Leucine-rich PPR motif-containing protein, mitochondrial (lrpprc) of Xenopus tropicalis (Western clawed frog).